A 562-amino-acid polypeptide reads, in one-letter code: NAD-dependent malic enzyme (562 aa).

The active-site Proton donor is Tyr-101. Arg-154 contributes to the NAD(+) binding site. Lys-172 serves as the catalytic Proton acceptor. Positions 243, 244, and 267 each coordinate a divalent metal cation. 2 residues coordinate NAD(+): Asp-267 and Asn-415.

It belongs to the malic enzymes family. Homotetramer. It depends on Mg(2+) as a cofactor. Mn(2+) serves as cofactor.

The catalysed reaction is (S)-malate + NAD(+) = pyruvate + CO2 + NADH. It carries out the reaction oxaloacetate + H(+) = pyruvate + CO2. The chain is NAD-dependent malic enzyme from Shewanella baltica (strain OS223).